The chain runs to 522 residues: ATP synthase subunit alpha (522 aa).

176–183 serves as a coordination point for ATP; the sequence is GDRQTGKT.

Belongs to the ATPase alpha/beta chains family. F-type ATPases have 2 components, CF(1) - the catalytic core - and CF(0) - the membrane proton channel. CF(1) has five subunits: alpha(3), beta(3), gamma(1), delta(1), epsilon(1). CF(0) has four main subunits: a, b, b' and c.

The protein resides in the cell membrane. The enzyme catalyses ATP + H2O + 4 H(+)(in) = ADP + phosphate + 5 H(+)(out). Its function is as follows. Produces ATP from ADP in the presence of a proton gradient across the membrane. The alpha chain is a regulatory subunit. This Chloroflexus aggregans (strain MD-66 / DSM 9485) protein is ATP synthase subunit alpha.